A 354-amino-acid chain; its full sequence is Uroporphyrinogen decarboxylase (354 aa).

Substrate is bound by residues 27–31 (RQAGR), D77, Y154, T209, and H327.

This sequence belongs to the uroporphyrinogen decarboxylase family. Homodimer.

Its subcellular location is the cytoplasm. It catalyses the reaction uroporphyrinogen III + 4 H(+) = coproporphyrinogen III + 4 CO2. The protein operates within porphyrin-containing compound metabolism; protoporphyrin-IX biosynthesis; coproporphyrinogen-III from 5-aminolevulinate: step 4/4. Catalyzes the decarboxylation of four acetate groups of uroporphyrinogen-III to yield coproporphyrinogen-III. The polypeptide is Uroporphyrinogen decarboxylase (Escherichia fergusonii (strain ATCC 35469 / DSM 13698 / CCUG 18766 / IAM 14443 / JCM 21226 / LMG 7866 / NBRC 102419 / NCTC 12128 / CDC 0568-73)).